The primary structure comprises 1164 residues: Integrin alpha-5 (1164 aa).

Over residues 1-14 the composition is skewed to basic and acidic residues; that stretch reads MREEGGGSREKEGE. Residues 1-119 are disordered; the sequence is MREEGGGSRE…MGSRTPGSPL (119 aa). Residues 81–90 are compositionally biased toward low complexity; the sequence is LLPALSHSPL. One copy of the FG-GAP 1 repeat lies at 156–221; that stretch reads NLDAEAPAVL…CPWGTSPAQC (66 aa). A glycan (N-linked (GlcNAc...) asparagine) is linked at Asn197. Residues Cys212 and Cys221 are joined by a disulfide bond. Phosphoserine is present on Ser240. FG-GAP repeat units follow at residues 241-301, 306-358, 372-424, 425-490, 491-550, and 554-617; these read SEGE…QILE, RSDF…AESY, QTRQ…GSDI, RSLY…GMEP, TPTL…GLAS, and QVLL…IFPA. A disulfide bond links Cys269 and Cys289. An N-linked (GlcNAc...) asparagine glycan is attached at Asn295. A disulfide bridge links Cys305 with Cys318. Residues Gln375 and Asp382 each coordinate a protein. Ca(2+)-binding residues include Glu393, Ser395, Asp397, and Asp401. 3 N-linked (GlcNAc...) asparagine glycosylation sites follow: Asn410, Asn420, and Asn429. Residues Asp447, Asn449, Asp451, Leu453, Asp455, Asp514, Asp516, Asp518, Tyr520, Asp522, Asp578, Asp580, Asn582, Tyr584, and Asp586 each contribute to the Ca(2+) site. A disulfide bond links Cys626 and Cys635. Residues Asn637, Asn643, Asn706, and Asn722 are each glycosylated (N-linked (GlcNAc...) asparagine). Cysteines 641 and 697 form a disulfide. Cys758 and Cys764 form a disulfide bridge. 5 N-linked (GlcNAc...) asparagine glycosylation sites follow: Asn788, Asn825, Asn837, Asn886, and Asn982. Cysteines 831 and 844 form a disulfide. Intrachain disulfides connect Cys962/Cys1072, Cys983/Cys1036, and Cys1026/Cys1031. The interval 983-1022 is disordered; the sequence is CTTSHPPNPEGLELDPEGSQHHRLQRRDVPGRSPASSGPQ. Residues 1114–1134 form a helical membrane-spanning segment; that stretch reads LWIIILAILIGLLLLGLLIYI. At 1135 to 1164 the chain is on the cytoplasmic side; it reads LYKLGFFKRSLPYGTAMEKAQLKPPATSDA. The tract at residues 1136–1143 is interaction with HPS5; that stretch reads YKLGFFKR. The short motif at 1139–1143 is the GFFKR motif element; the sequence is GFFKR.

Belongs to the integrin alpha chain family. Heterodimer of an alpha and a beta subunit. The alpha subunit is composed of a heavy and a light chain linked by a disulfide bond. Alpha-5 associates with beta-1. Interacts with NISCH. Interacts with HPS5. Interacts with RAB21 and COMP. Interacts with CIB1. ITGA5:ITGB1 interacts with CCN3. ITGA5:ITGB1 interacts with FBN1. ITGA5:ITGB1 interacts with IL1B. ITGA5:ITGB1 interacts with ACE2. ITGA5:ITGB1 interacts with SELP. Interacts with ANGPT2. ITGA5:ITGB1 interacts with IGFBP2. ITGA5:ITGB1 interacts with IGFBP1. Post-translationally, proteolytic cleavage by PCSK5 mediates activation of the precursor.

The protein localises to the cell membrane. It localises to the cell junction. The protein resides in the focal adhesion. In terms of biological role, integrin alpha-5/beta-1 (ITGA5:ITGB1) is a receptor for fibronectin and fibrinogen. It recognizes the sequence R-G-D in its ligands. ITGA5:ITGB1 binds to PLA2G2A via a site (site 2) which is distinct from the classical ligand-binding site (site 1) and this induces integrin conformational changes and enhanced ligand binding to site 1. ITGA5:ITGB1 acts as a receptor for fibrillin-1 (FBN1) and mediates R-G-D-dependent cell adhesion to FBN1. ITGA5:ITGB1 acts as a receptor for fibronectin (FN1) and mediates R-G-D-dependent cell adhesion to FN1. ITGA5:ITGB1 is a receptor for IL1B and binding is essential for IL1B signaling. ITGA5:ITGB3 is a receptor for soluble CD40LG and is required for CD40/CD40LG signaling. This chain is Integrin alpha-5 (ITGA5), found in Bos taurus (Bovine).